Reading from the N-terminus, the 121-residue chain is MAKKKKINVPSGLIHVSCSPNNTIVSATDPSGNVLCWASSGTVGFKGFRKKTPYSAGVAADKVAKTVKEMGMGSVKMYLKGTGRGKDTTIRSFANAGITITEINEKTPIPHNGCKPPKRPR.

Belongs to the universal ribosomal protein uS11 family. In terms of assembly, part of the 30S ribosomal subunit. Interacts with proteins S7 and S18. Binds to IF-3.

Functionally, located on the platform of the 30S subunit, it bridges several disparate RNA helices of the 16S rRNA. Forms part of the Shine-Dalgarno cleft in the 70S ribosome. In Mycoplasma genitalium (strain ATCC 33530 / DSM 19775 / NCTC 10195 / G37) (Mycoplasmoides genitalium), this protein is Small ribosomal subunit protein uS11.